Consider the following 44-residue polypeptide: Thymosin beta-4 (44 aa).

Residues 1 to 25 (MSDKPDMAEIEKFDKSKLKKTETQE) are compositionally biased toward basic and acidic residues. Residues 1-44 (MSDKPDMAEIEKFDKSKLKKTETQEKNPLPSKETIEQEKQAGES) are disordered. At serine 2 the chain carries N-acetylserine. Serine 2 carries the phosphoserine modification. Lysine 4 is modified (N6-acetyllysine). Position 12 is an N6-acetyllysine; alternate (lysine 12). Residue lysine 12 forms a Glycyl lysine isopeptide (Lys-Gly) (interchain with G-Cter in SUMO2); alternate linkage. Threonine 23 is subject to Phosphothreonine. Lysine 26 carries the N6-acetyllysine modification. Phosphoserine is present on serine 31. Lysine 32 is modified (N6-acetyllysine). A compositionally biased stretch (basic and acidic residues) spans 33-44 (ETIEQEKQAGES). Threonine 34 carries the phosphothreonine modification. Lysine 39 bears the N6-acetyllysine mark.

Belongs to the thymosin beta family. Identified in a complex composed of ACTA1, COBL, GSN AND TMSB4X. Interacts with SERPINB1. AcSDKP is inactivated by ACE, which removes the dipeptide Lys-Pro from its C-terminus.

The protein resides in the cytoplasm. The protein localises to the cytoskeleton. Its function is as follows. Plays an important role in the organization of the cytoskeleton. Binds to and sequesters actin monomers (G actin) and therefore inhibits actin polymerization. Functionally, potent inhibitor of bone marrow derived stem cell differentiation. Acts by inhibits the entry of hematopoietic pluripotent stem cells into the S-phase. The chain is Thymosin beta-4 (TMSB4) from Bos taurus (Bovine).